Here is a 463-residue protein sequence, read N- to C-terminus: Quinolone resistance protein NorB (463 aa).

Transmembrane regions (helical) follow at residues 17–37, 53–73, 86–106, 107–127, 142–162, 165–185, 201–221, 230–250, 273–293, 299–319, 334–354, 357–377, 403–423, and 435–455; these read IGIV…VNVV, IAVS…GGLA, IILN…LLLI, IGRL…LSII, YWSI…GAVA, LGWR…LFLI, FDIK…ILIT, SLLF…FIVL, TASN…NTFV, YSSL…LIMI, PMLI…LTFL, ILYV…LGIY, MASA…YAIV, and IALW…LLLV.

Belongs to the major facilitator superfamily. TCR/Tet family.

The protein resides in the cell membrane. Its function is as follows. Multidrug efflux pump that acts independently of NorA and is one of the factors that confers resistance against diverse quinolones and chemical compounds. Can facilitate bacterial survival in vivo when overexpressed in an abscess and may contribute to the relative resistance of staphylococcal abscesses to antimicrobial therapy. This is Quinolone resistance protein NorB (norB) from Staphylococcus aureus (strain MW2).